The sequence spans 257 residues: RING1 and YY1-binding protein B (257 aa).

Disordered regions lie at residues 1-24 and 45-257; these read MGDKKSPTRPKRQAKPTADNGFWD and RKGT…DESF. The RanBP2-type zinc finger occupies 19–48; sequence DNGFWDCSVCTFRNSAEAFKCSICDVRKGT. The span at 74–129 shows a compositional bias: basic and acidic residues; sequence PKKEKKEKPERPEKDRAEEERPDINPPDEHPVEQRDKDKSEKEQPEKEKKDREKEI. The span at 149–168 shows a compositional bias: polar residues; sequence HQSPPSERNSIQSGKSTTKT. A compositionally biased stretch (basic residues) spans 169–178; it reads KNSHNSRPKL. Over residues 209-233 the composition is skewed to low complexity; it reads TSSTSSSTVTSSASSEQQHQSSGSE.

The protein localises to the nucleus. Its subcellular location is the cytoplasm. May be implicated in the regulation of the transcription as a repressor of the transcriptional activity of E4TF1. The protein is RING1 and YY1-binding protein B (rybpb) of Danio rerio (Zebrafish).